A 155-amino-acid chain; its full sequence is Transcriptional repressor NrdR (155 aa).

A zinc finger lies at 3–34; it reads CPFCGNIDTQVKDSRPAEDHVSIRRRRFCPAC. The 91-residue stretch at 49 to 139 folds into the ATP-cone domain; that stretch reads LVVIKSSGKR…VYKNFQAADD (91 aa).

Belongs to the NrdR family. Zn(2+) serves as cofactor.

In terms of biological role, negatively regulates transcription of bacterial ribonucleotide reductase nrd genes and operons by binding to NrdR-boxes. This is Transcriptional repressor NrdR from Cereibacter sphaeroides (strain ATCC 17025 / ATH 2.4.3) (Rhodobacter sphaeroides).